We begin with the raw amino-acid sequence, 57 residues long: MNIENLKTKAEADISEYITKKIIELKKKTGKEVTSIQFTAREKMTGLESYDVKINLI.

This sequence belongs to the gns family.

In terms of biological role, overexpression increases levels of unsaturated fatty acids and suppresses both the temperature-sensitive fabA6 mutation and cold-sensitive secG null mutation. The sequence is that of Protein GnsB (gnsB) from Escherichia coli (strain K12).